Consider the following 136-residue polypeptide: Small ribosomal subunit protein uS8c (136 aa).

Belongs to the universal ribosomal protein uS8 family. Part of the 30S ribosomal subunit.

Its subcellular location is the plastid. It is found in the chloroplast. One of the primary rRNA binding proteins, it binds directly to 16S rRNA central domain where it helps coordinate assembly of the platform of the 30S subunit. The chain is Small ribosomal subunit protein uS8c (rps8) from Saccharum officinarum (Sugarcane).